Here is a 184-residue protein sequence, read N- to C-terminus: Mitochondrial translation release factor in rescue (184 aa).

The transit peptide at 1–98 directs the protein to the mitochondrion; sequence MSSRSTWALL…HVPSGIVVKC (98 aa). The tract at residues 60–124 is GGQ domain; sequence ESELEEQFVK…LQEKVDVFYN (65 aa). The GGQ signature appears at 74–76; sequence GGQ. Gln76 bears the N5-methylglutamine mark. The stretch at 130-178 forms a coiled coil; sequence VHKEKLEAERRKRERKKRAKETLEKKKLLKELREASQNITEKKADADGI. Residues 132–184 are disordered; sequence KEKLEAERRKRERKKRAKETLEKKKLLKELREASQNITEKKADADGIPRGFQE. Residues 149–184 show a composition bias toward basic and acidic residues; it reads KETLEKKKLLKELREASQNITEKKADADGIPRGFQE.

Belongs to the prokaryotic/mitochondrial release factor family. In terms of assembly, interacts (via C-terminus) with MTRES1 (via S4 domain). Associates with mitoribosomal S39 large subunit, peptidyl tRNA and nascent chain. Post-translationally, methylation of glutamine in the GGQ triplet by HEMK1.

The protein localises to the mitochondrion. Functionally, part of a mitoribosome-associated quality control pathway that prevents aberrant translation by responding to interruptions during elongation. As heterodimer with MTRES1, ejects the unfinished nascent chain and peptidyl transfer RNA (tRNA), respectively, from stalled ribosomes. Recruitment of mitoribosome biogenesis factors to these quality control intermediates suggests additional roles for MTRES1 and MTRF during mitoribosome rescue. In Mus musculus (Mouse), this protein is Mitochondrial translation release factor in rescue.